Consider the following 459-residue polypeptide: Exodeoxyribonuclease 7 large subunit (459 aa).

Belongs to the XseA family. In terms of assembly, heterooligomer composed of large and small subunits.

It localises to the cytoplasm. The enzyme catalyses Exonucleolytic cleavage in either 5'- to 3'- or 3'- to 5'-direction to yield nucleoside 5'-phosphates.. Its function is as follows. Bidirectionally degrades single-stranded DNA into large acid-insoluble oligonucleotides, which are then degraded further into small acid-soluble oligonucleotides. The polypeptide is Exodeoxyribonuclease 7 large subunit (Pseudomonas aeruginosa (strain UCBPP-PA14)).